Here is a 451-residue protein sequence, read N- to C-terminus: Kynureninase (451 aa).

Residues leucine 131, serine 132, 159 to 162, serine 215, aspartate 244, histidine 247, and tyrosine 269 each bind pyridoxal 5'-phosphate; that span reads FPSD. Lysine 270 bears the N6-(pyridoxal phosphate)lysine mark. The pyridoxal 5'-phosphate site is built by tryptophan 303 and asparagine 331.

Belongs to the kynureninase family. In terms of assembly, homodimer. It depends on pyridoxal 5'-phosphate as a cofactor.

Its subcellular location is the cytoplasm. The catalysed reaction is L-kynurenine + H2O = anthranilate + L-alanine + H(+). The enzyme catalyses 3-hydroxy-L-kynurenine + H2O = 3-hydroxyanthranilate + L-alanine + H(+). The protein operates within amino-acid degradation; L-kynurenine degradation; L-alanine and anthranilate from L-kynurenine: step 1/1. It participates in cofactor biosynthesis; NAD(+) biosynthesis; quinolinate from L-kynurenine: step 2/3. Catalyzes the cleavage of L-kynurenine (L-Kyn) and L-3-hydroxykynurenine (L-3OHKyn) into anthranilic acid (AA) and 3-hydroxyanthranilic acid (3-OHAA), respectively. This chain is Kynureninase, found in Dictyostelium discoideum (Social amoeba).